The following is a 570-amino-acid chain: Proline--tRNA ligase (570 aa).

It belongs to the class-II aminoacyl-tRNA synthetase family. ProS type 1 subfamily. Homodimer.

The protein localises to the cytoplasm. It carries out the reaction tRNA(Pro) + L-proline + ATP = L-prolyl-tRNA(Pro) + AMP + diphosphate. Its function is as follows. Catalyzes the attachment of proline to tRNA(Pro) in a two-step reaction: proline is first activated by ATP to form Pro-AMP and then transferred to the acceptor end of tRNA(Pro). As ProRS can inadvertently accommodate and process non-cognate amino acids such as alanine and cysteine, to avoid such errors it has two additional distinct editing activities against alanine. One activity is designated as 'pretransfer' editing and involves the tRNA(Pro)-independent hydrolysis of activated Ala-AMP. The other activity is designated 'posttransfer' editing and involves deacylation of mischarged Ala-tRNA(Pro). The misacylated Cys-tRNA(Pro) is not edited by ProRS. This is Proline--tRNA ligase from Geotalea daltonii (strain DSM 22248 / JCM 15807 / FRC-32) (Geobacter daltonii).